Here is an 877-residue protein sequence, read N- to C-terminus: Bifunctional uridylyltransferase/uridylyl-removing enzyme (877 aa).

A uridylyltransferase region spans residues 1–335; that stretch reads MDGPNSDRAH…HRDDAFSPTP (335 aa). Positions 336–695 are uridylyl-removing; sequence VNDHFQAVND…LRPESLRGSV (360 aa). Residues 454–576 form the HD domain; that stretch reads VDEHTLFVVR…VRNQNTLNHL (123 aa). 2 ACT domains span residues 696–778 and 805–877; these read EVFI…AVSR and ILEL…VGDQ.

The protein belongs to the GlnD family. Requires Mg(2+) as cofactor.

The enzyme catalyses [protein-PII]-L-tyrosine + UTP = [protein-PII]-uridylyl-L-tyrosine + diphosphate. The catalysed reaction is [protein-PII]-uridylyl-L-tyrosine + H2O = [protein-PII]-L-tyrosine + UMP + H(+). With respect to regulation, uridylyltransferase (UTase) activity is inhibited by glutamine, while glutamine activates uridylyl-removing (UR) activity. In terms of biological role, modifies, by uridylylation and deuridylylation, the PII regulatory proteins (GlnB and homologs), in response to the nitrogen status of the cell that GlnD senses through the glutamine level. Under low glutamine levels, catalyzes the conversion of the PII proteins and UTP to PII-UMP and PPi, while under higher glutamine levels, GlnD hydrolyzes PII-UMP to PII and UMP (deuridylylation). Thus, controls uridylylation state and activity of the PII proteins, and plays an important role in the regulation of nitrogen fixation and metabolism. The polypeptide is Bifunctional uridylyltransferase/uridylyl-removing enzyme (Methylococcus capsulatus (strain ATCC 33009 / NCIMB 11132 / Bath)).